The primary structure comprises 94 residues: Enhancer of yellow 2 transcription factor (94 aa).

It belongs to the ENY2 family. As to quaternary structure, component of the nuclear pore complex (NPC)-associated AMEX complex (anchoring and mRNA export complex), composed of at least e(y)2 and xmas-2. Component of the SAGA transcription coactivator-HAT complexes, at least composed of Ada2b, e(y)2, Pcaf/Gcn5, Taf10 and Nipped-A/Trrap. Within the SAGA complex, e(y)2, Sgf11, and not/nonstop form an additional subcomplex of SAGA called the DUB module (deubiquitination module). Component of the THO complex, composed of at least e(y)2, HPR1, THO2, THOC5, THOC6 and THOC7. Interacts with e(y)1. Interacts with su(Hw) (via zinc fingers). Interacts with xmas-2; required for localization to the nuclear periphery. Interacts with the nuclear pore complex (NPC).

The protein localises to the nucleus. It is found in the nucleoplasm. The protein resides in the cytoplasm. Involved in mRNA export coupled transcription activation by association with both the AMEX and the SAGA complexes. The SAGA complex is a multiprotein complex that activates transcription by remodeling chromatin and mediating histone acetylation and deubiquitination. Within the SAGA complex, participates in a subcomplex that specifically deubiquitinates histone H2B. The SAGA complex is recruited to specific gene promoters by activators, where it is required for transcription. Required for nuclear receptor-mediated transactivation. Involved in transcription elongation by recruiting the THO complex onto nascent mRNA. The AMEX complex functions in docking export-competent ribonucleoprotein particles (mRNPs) to the nuclear entrance of the nuclear pore complex (nuclear basket). AMEX participates in mRNA export and accurate chromatin positioning in the nucleus by tethering genes to the nuclear periphery. The chain is Enhancer of yellow 2 transcription factor from Drosophila grimshawi (Hawaiian fruit fly).